Here is a 296-residue protein sequence, read N- to C-terminus: Ribosomal protein L11 methyltransferase (296 aa).

Positions 147, 168, 190, and 232 each coordinate S-adenosyl-L-methionine.

The protein belongs to the methyltransferase superfamily. PrmA family.

Its subcellular location is the cytoplasm. The catalysed reaction is L-lysyl-[protein] + 3 S-adenosyl-L-methionine = N(6),N(6),N(6)-trimethyl-L-lysyl-[protein] + 3 S-adenosyl-L-homocysteine + 3 H(+). In terms of biological role, methylates ribosomal protein L11. This is Ribosomal protein L11 methyltransferase from Marinomonas sp. (strain MWYL1).